Here is a 752-residue protein sequence, read N- to C-terminus: Iron-sulfur clusters transporter ABCB7, mitochondrial (752 aa).

The transit peptide at Met-1–Lys-22 directs the protein to the mitochondrion. The Mitochondrial matrix segment spans residues His-23–Val-140. The region spanning Val-140 to Gln-436 is the ABC transmembrane type-1 domain. A helical membrane pass occupies residues Ala-141 to Phe-161. Topologically, residues Lys-162–Val-185 are mitochondrial intermembrane. The helical transmembrane segment at Ala-186–Phe-206 threads the bilayer. Residues Asn-207–Gly-259 are Mitochondrial matrix-facing. N6-acetyllysine is present on residues Lys-216 and Lys-251. Residues Ile-260–Leu-280 traverse the membrane as a helical segment. Residues Val-281 to Gly-290 are Mitochondrial intermembrane-facing. The helical transmembrane segment at Ala-291–Val-311 threads the bilayer. The Mitochondrial matrix portion of the chain corresponds to Thr-312–Ser-382. Residue Arg-315 to Arg-319 participates in glutathione binding. Ser-336 is modified (phosphoserine). Residue Tyr-340 is modified to Phosphotyrosine. A Phosphothreonine modification is found at Thr-342. Position 350 is an N6-acetyllysine (Lys-350). A glutathione-binding site is contributed by Asn-378 to Gln-381. Residues Ala-383–Gly-403 form a helical membrane-spanning segment. Residues Ala-404–Asp-409 are Mitochondrial intermembrane-facing. The chain crosses the membrane as a helical span at residues Leu-410–Val-430. Gly-428 contacts glutathione. Over Tyr-431–Cys-752 the chain is Mitochondrial matrix. The ABC transporter domain occupies Val-472–His-706. Residues Tyr-481 and Gly-505–Arg-516 each bind ATP.

Belongs to the ABC transporter superfamily. ABCB family. Heavy Metal importer (TC 3.A.1.210) subfamily. As to quaternary structure, homodimer or heterodimer. Interacts with C10orf88/PAAT. Forms a complex with ABCB10 and FECH, where a dimeric FECH bridges ABCB7 and ABCB10 homodimers; this complex may be required for cellular iron homeostasis, mitochondrial function and heme biosynthesis. Interacts with FECH. Interacts with ATP5F1A. Interacts with COX4I1; this interaction allows the regulation of cellular iron homeostasis and cellular reactive oxygen species (ROS) levels in cardiomyocytes.

It localises to the mitochondrion inner membrane. The enzyme catalyses (glutathione)4[2Fe(III)-2S] cluster(in) + ATP + H2O = (glutathione)4[2Fe(III)-2S] cluster(out) + ADP + phosphate + H(+). Functionally, exports glutathione-coordinated iron-sulfur clusters such as [2Fe-2S]-(GS)4 cluster from the mitochondria to the cytosol in an ATP-dependent manner allowing the assembly of the cytosolic iron-sulfur (Fe/S) cluster-containing proteins and participates in iron homeostasis. Moreover, through a functional complex formed of ABCB7, FECH and ABCB10, also plays a role in the cellular iron homeostasis, mitochondrial function and heme biosynthesis. In cardiomyocytes, regulates cellular iron homeostasis and cellular reactive oxygen species (ROS) levels through its interaction with COX4I1. May also play a role in hematopoiesis. The protein is Iron-sulfur clusters transporter ABCB7, mitochondrial of Rattus norvegicus (Rat).